Consider the following 1960-residue polypeptide: Myosin-9 (1960 aa).

A2 bears the N-acetylalanine mark. Positions 2-838 (AQQAADKYLY…RLFTKVKPLL (837 aa)) are mediates interaction with LIMCH1. Residue K8 is modified to N6-acetyllysine. At Y11 the chain carries Phosphotyrosine. The region spanning 27-77 (AAKKLVWVPSDKSGFEPASLKEEVGEEAIVELVENGKKVKVNKDDIQKMNP) is the Myosin N-terminal SH3-like domain. Residues 81 to 776 (SKVEDMAELT…VLAHLEEERD (696 aa)) enclose the Myosin motor domain. N6-acetyllysine is present on K102. 174-181 (GESGAGKT) lines the ATP pocket. 3 positions are modified to N6-acetyllysine: K299, K435, and K613. S628 is modified (phosphoserine). The actin-binding stretch occupies residues 654–676 (LAKLMATLRNTNPNFVRCIIPNH). Y754 is subject to Phosphotyrosine. One can recognise an IQ domain in the interval 779–808 (ITDVIIGFQACCRGYLARKAFAKRQQQLTA). Residues 837-1926 (LLQVSRQEEE…LKNKLRRGDL (1090 aa)) adopt a coiled-coil conformation. K850 bears the N6-succinyllysine mark. N6-acetyllysine is present on residues K860, K975, and K1024. Residues 1035-1055 (RLRREEKQRQELEKTRRKLEG) are compositionally biased toward basic and acidic residues. The interval 1035 to 1057 (RLRREEKQRQELEKTRRKLEGDS) is disordered. S1114 is subject to Phosphoserine. A disordered region spans residues 1118–1137 (EDLESERASRNKAEKQKRDL). Residues 1122-1137 (SERASRNKAEKQKRDL) show a composition bias toward basic and acidic residues. Residues K1234, K1249, K1357, K1392, K1404, K1410, K1459, and K1638 each carry the N6-acetyllysine modification. N6-succinyllysine is present on K1669. A Phosphoserine modification is found at S1714. K1793, K1802, and K1845 each carry N6-acetyllysine. The tract at residues 1877–1960 (RQLEEAEEEA…ADGAEAKPAE (84 aa)) is disordered. An Omega-N-methylarginine modification is found at R1923. S1943 carries the phosphoserine modification. Basic and acidic residues predominate over residues 1948–1960 (DGKADGAEAKPAE).

It belongs to the TRAFAC class myosin-kinesin ATPase superfamily. Myosin family. Myosin is a hexameric protein that consists of 2 heavy chain subunits (MHC), 2 alkali light chain subunits (MLC) and 2 regulatory light chain subunits (MLC-2). Interacts with RASIP1. Interacts with DDR1. Interacts with PDLIM2. Interacts with SVIL. Interacts with HTRA3. Interacts with Myo7a. Interacts with CFAP95. Interacts with LIMCH1; independently of the integration of MYH9 into the myosin complex. Interacts with RAB3A. Interacts with ZBED4. Interacts with S100A4; this interaction increases cell motility. In terms of assembly, (Microbial infection) Interacts with herpes simplex virus 1/HHV-1 envelope glycoprotein B. Post-translationally, ISGylated. Ubiquitination. As to expression, in the kidney, expressed in the glomeruli. Also expressed in leukocytes.

It localises to the cytoplasm. It is found in the cytoskeleton. The protein resides in the cell cortex. The protein localises to the cytoplasmic vesicle. Its subcellular location is the secretory vesicle. It localises to the cortical granule. It is found in the cell membrane. Its function is as follows. Cellular myosin that appears to play a role in cytokinesis, cell shape, and specialized functions such as secretion and capping. Required for cortical actin clearance prior to oocyte exocytosis. Promotes cell motility in conjunction with S100A4. During cell spreading, plays an important role in cytoskeleton reorganization, focal contact formation (in the margins but not the central part of spreading cells), and lamellipodial retraction; this function is mechanically antagonized by MYH10. (Microbial infection) Acts as a receptor for herpes simplex virus 1/HHV-1 envelope glycoprotein B. In Homo sapiens (Human), this protein is Myosin-9 (MYH9).